The following is a 247-amino-acid chain: UPF0309 protein lin2794 (247 aa).

The 184-residue stretch at 31 to 214 (VAESIENDGV…EKMVNDNFTP (184 aa)) folds into the SIS domain.

This sequence belongs to the UPF0309 family.

The polypeptide is UPF0309 protein lin2794 (Listeria innocua serovar 6a (strain ATCC BAA-680 / CLIP 11262)).